The following is a 465-amino-acid chain: UDP-N-acetylmuramate--L-alanine ligase (465 aa).

112–118 contributes to the ATP binding site; sequence GTHGKTT.

It belongs to the MurCDEF family.

Its subcellular location is the cytoplasm. The catalysed reaction is UDP-N-acetyl-alpha-D-muramate + L-alanine + ATP = UDP-N-acetyl-alpha-D-muramoyl-L-alanine + ADP + phosphate + H(+). The protein operates within cell wall biogenesis; peptidoglycan biosynthesis. Functionally, cell wall formation. The polypeptide is UDP-N-acetylmuramate--L-alanine ligase (Burkholderia thailandensis (strain ATCC 700388 / DSM 13276 / CCUG 48851 / CIP 106301 / E264)).